We begin with the raw amino-acid sequence, 179 residues long: Large ribosomal subunit protein uL5 (179 aa).

Belongs to the universal ribosomal protein uL5 family. Part of the 50S ribosomal subunit; part of the 5S rRNA/L5/L18/L25 subcomplex. Contacts the 5S rRNA and the P site tRNA. Forms a bridge to the 30S subunit in the 70S ribosome.

In terms of biological role, this is one of the proteins that bind and probably mediate the attachment of the 5S RNA into the large ribosomal subunit, where it forms part of the central protuberance. In the 70S ribosome it contacts protein S13 of the 30S subunit (bridge B1b), connecting the 2 subunits; this bridge is implicated in subunit movement. Contacts the P site tRNA; the 5S rRNA and some of its associated proteins might help stabilize positioning of ribosome-bound tRNAs. The protein is Large ribosomal subunit protein uL5 of Bacillus cereus (strain Q1).